The sequence spans 678 residues: Alpha-L-arabinofuranosidase 1 (678 aa).

Residues 1 to 33 (MDMESWKLLRSVCVLSFLLGSCFVYQSLRVVDA) form the signal peptide. The CBM-cenC domain occupies 152-239 (NIEEGKKYKV…WIDQVSAMPV (88 aa)). 4 N-linked (GlcNAc...) asparagine glycosylation sites follow: Asn181, Asn362, Asn523, and Asn555.

The protein belongs to the glycosyl hydrolase 51 family. In terms of tissue distribution, expressed in roots, leaves, flowers, stems, siliques and seedlings. Observed in zones of cell proliferation, the vascular system and floral abscission zones. Expressed in the guard cells in stems, in xylem vessels and parenchyma cells surrounding the vessels, in the cambium and in the phloem, but not in the secondary xylem.

Its subcellular location is the secreted. The protein localises to the extracellular space. The protein resides in the extracellular matrix. It carries out the reaction Hydrolysis of terminal non-reducing alpha-L-arabinofuranoside residues in alpha-L-arabinosides.. Its function is as follows. May be involved in the coordinated dissolution of the cell wall matrix during abscission and in the secondary cell wall formation in xylem vessels. Prefers arabinoxylan, but may also use pectic arabinans as substrates. The chain is Alpha-L-arabinofuranosidase 1 (ASD1) from Arabidopsis thaliana (Mouse-ear cress).